The primary structure comprises 201 residues: Large ribosomal subunit protein uL4 (201 aa).

The disordered stretch occupies residues 44 to 71 (RAQKTRAEVTGSGKKPWRQKGTGRARSG).

This sequence belongs to the universal ribosomal protein uL4 family. In terms of assembly, part of the 50S ribosomal subunit.

In terms of biological role, one of the primary rRNA binding proteins, this protein initially binds near the 5'-end of the 23S rRNA. It is important during the early stages of 50S assembly. It makes multiple contacts with different domains of the 23S rRNA in the assembled 50S subunit and ribosome. Its function is as follows. Forms part of the polypeptide exit tunnel. The chain is Large ribosomal subunit protein uL4 from Pectobacterium carotovorum subsp. carotovorum (strain PC1).